Consider the following 306-residue polypeptide: Protein FAM228A (306 aa).

The disordered stretch occupies residues 237 to 277; sequence HASKLSQQNKGAEKKGLALGTRAQRPRSWAAADSPQGTPLV. Residue Ser270 is modified to Phosphoserine.

It belongs to the FAM228 family.

The protein is Protein FAM228A (Fam228a) of Rattus norvegicus (Rat).